Consider the following 98-residue polypeptide: Small ribosomal subunit protein bS18 (98 aa).

The protein belongs to the bacterial ribosomal protein bS18 family. Part of the 30S ribosomal subunit. Forms a tight heterodimer with protein bS6.

Its function is as follows. Binds as a heterodimer with protein bS6 to the central domain of the 16S rRNA, where it helps stabilize the platform of the 30S subunit. The polypeptide is Small ribosomal subunit protein bS18 (Flavobacterium johnsoniae (strain ATCC 17061 / DSM 2064 / JCM 8514 / BCRC 14874 / CCUG 350202 / NBRC 14942 / NCIMB 11054 / UW101) (Cytophaga johnsonae)).